Consider the following 158-residue polypeptide: Methylated-DNA--protein-cysteine methyltransferase (158 aa).

Residue C126 is the Nucleophile; methyl group acceptor of the active site.

The protein belongs to the MGMT family.

The protein localises to the cytoplasm. The enzyme catalyses a 6-O-methyl-2'-deoxyguanosine in DNA + L-cysteinyl-[protein] = S-methyl-L-cysteinyl-[protein] + a 2'-deoxyguanosine in DNA. The catalysed reaction is a 4-O-methyl-thymidine in DNA + L-cysteinyl-[protein] = a thymidine in DNA + S-methyl-L-cysteinyl-[protein]. Functionally, involved in the cellular defense against the biological effects of O6-methylguanine (O6-MeG) and O4-methylthymine (O4-MeT) in DNA. Repairs the methylated nucleobase in DNA by stoichiometrically transferring the methyl group to a cysteine residue in the enzyme. This is a suicide reaction: the enzyme is irreversibly inactivated. This is Methylated-DNA--protein-cysteine methyltransferase from Methanosarcina barkeri (strain Fusaro / DSM 804).